Reading from the N-terminus, the 297-residue chain is Light-independent protochlorophyllide reductase iron-sulfur ATP-binding protein (297 aa).

Residues 41–46 (GIGKST) and K70 each bind ATP. S45 lines the Mg(2+) pocket. 2 residues coordinate [4Fe-4S] cluster: C126 and C160. ATP-binding positions include 211-212 (NR) and 235-237 (PDL).

The protein belongs to the NifH/BchL/ChlL family. As to quaternary structure, homodimer. Protochlorophyllide reductase is composed of three subunits; BchL, BchN and BchB. [4Fe-4S] cluster is required as a cofactor.

The enzyme catalyses chlorophyllide a + oxidized 2[4Fe-4S]-[ferredoxin] + 2 ADP + 2 phosphate = protochlorophyllide a + reduced 2[4Fe-4S]-[ferredoxin] + 2 ATP + 2 H2O. It functions in the pathway porphyrin-containing compound metabolism; bacteriochlorophyll biosynthesis (light-independent). In terms of biological role, component of the dark-operative protochlorophyllide reductase (DPOR) that uses Mg-ATP and reduced ferredoxin to reduce ring D of protochlorophyllide (Pchlide) to form chlorophyllide a (Chlide). This reaction is light-independent. The L component serves as a unique electron donor to the NB-component of the complex, and binds Mg-ATP. The sequence is that of Light-independent protochlorophyllide reductase iron-sulfur ATP-binding protein from Cereibacter sphaeroides (strain ATCC 17025 / ATH 2.4.3) (Rhodobacter sphaeroides).